Consider the following 63-residue polypeptide: Cecropin (63 aa).

The N-terminal stretch at 1-23 (MNFYKIFVFIALILALSVSQSEA) is a signal peptide. At Arg62 the chain carries Arginine amide.

In terms of assembly, monomer. In terms of tissue distribution, hemolymph.

The protein resides in the secreted. Functionally, cecropins have lytic and antibacterial activity against several Gram-negative bacteria. The protein is Cecropin of Glossina morsitans morsitans (Savannah tsetse fly).